A 306-amino-acid chain; its full sequence is Probable thioesterase atnL (306 aa).

Belongs to the lcsJ thioesterase family.

Functionally, part of the gene cluster that mediates the biosynthesis of aspercryptins, linear lipopeptides built from six amino acids including 2 highly unusual and nonproteogenic amino acids, 2-amino-octanoic acid (2aoa) and 2-amino-dodecanol (2adol). The core structure of aspercryptins is as follows: Ser/Ala-Thr-Ile/Val-2aoa-Asn-2adol. The first step of aspercryptin biosynthesis is the generation of the fatty acid precursors, octanoic and dodecanoic acids, by the FAS subunits atnF and atnM. The fatty acid precursors are likely transformed into the corresponding alpha-amino fatty acids in three steps. First, they are hydroxylated by the cytochrome P450 monooxygenase atnE, then oxidized to the corresponding alpha-keto acids by the NAD(P)-dependent oxidoreductase atnD, and finally converted to the alpha-amino fatty acids by the PLP-dependent aminotransferases atnH or atnJ. the alpha-amino fatty acids, 2-amino-octanoic and 2-amino-dodecanoic acids, are recognized, activated, and covalently tethered to the NRPS atnA by its fourth and sixth adenylation domains. The second module of atnA is the Thr module and contains an epimerase (E) domain responsible for the epimerization of Thr to D-allo-Thr. Additionally, despite atnA having only one epimerase domain, the first amino acid of aspercryptin A1 is D-Ser, suggesting that serine is either loaded directly as D-Ser on the first module or that the epimerase domain in the threonine module epimerizes both L-Ser and L-Thr. After condensation of the hexapeptide of aspercryptin, the C-terminal reductase (TE) domain might be involved in the reductive release and production of the aldehyde hexapeptide. Further reduction would generate aspercryptins. The variety of aspercryptins produced reflects the flexibility of the atnA NRPS, allowing incorporation of alanine instead of serine, valine for isoleucine, and a C10 fatty amino alcohol instead of the C12 version. AtnB seems to be involved in the selectivity for Ile versus Val by the third module. Moreover, type B, C and D aspercryptins have an additional N-terminal cichorine, acetyl and propionyl group respectively. This is Probable thioesterase atnL from Emericella nidulans (strain FGSC A4 / ATCC 38163 / CBS 112.46 / NRRL 194 / M139) (Aspergillus nidulans).